Reading from the N-terminus, the 384-residue chain is G protein-coupled receptor 88 (384 aa).

Over 1-35 (MTNSSSTSTSSTTGGSLLLLCEEEESWAGRRIPVS) the chain is Extracellular. Asparagine 3 carries an N-linked (GlcNAc...) asparagine glycan. A helical membrane pass occupies residues 36–56 (LLYSGLAIGGTLANGMVIYLV). Residues 57–73 (SSFRKLQTTSNAFIVNG) are Cytoplasmic-facing. Residues 74 to 94 (CAADLSVCALWMPQEAVLGLL) form a helical membrane-spanning segment. Residues 95–116 (PTGSAEPPADWDGAGGSYRLLR) are Extracellular-facing. Residues 117–136 (GGLLGLGLTVSLLSHCLVAL) traverse the membrane as a helical segment. The Cytoplasmic portion of the chain corresponds to 137–158 (NRYLLITRAPATYQALYQRRHT). The helical transmembrane segment at 159–179 (AGMLALSWALALGLVLLLPPW) threads the bilayer. At 180–195 (APRPGAAPPRVHYPAL) the chain is on the extracellular side. A helical membrane pass occupies residues 196-216 (LAAAALLAQTALLLHCYLGIV). Over 217–285 (RRVRVSVKRV…RAQRRLSGLS (69 aa)) the chain is Cytoplasmic. The chain crosses the membrane as a helical span at residues 286 to 306 (VLLLCCVFLLATQPLVWVSLA). The Extracellular segment spans residues 307 to 310 (SGFS). The helical transmembrane segment at 311 to 331 (LPVPWGVQAASWLLCCALSAL) threads the bilayer. At 332-384 (NPLLYTWRNEEFRRSVRSVLPGVGDAAAAAVAATAVPAVSQAQLGTRAAGQHW) the chain is on the cytoplasmic side.

This sequence belongs to the G-protein coupled receptor 1 family. Expressed predominantly in the striatum.

The protein resides in the cell membrane. Its subcellular location is the cell projection. It localises to the cilium membrane. The protein localises to the cytoplasm. It is found in the nucleus. In terms of biological role, orphan G protein-coupled receptor implicated in a large repertoire of behavioral responses that engage motor activities, spatial learning, and emotional processing. May play a role in the regulation of cognitive and motor function. Couples with the heterotrimeric G protein complex of the G(i) subfamily, consisting of GNAI1, GNB1 and GNG2, thereby acting through a G(i)-mediated pathway. Plays a role in the attenuation of D1 dopamine receptor (D1R)-mediated cAMP response in ciliated cells. In non-ciliated cells, involved in the inhibition of the beta-2 adrenergic receptor (B2AR) response. This is G protein-coupled receptor 88 (GPR88) from Homo sapiens (Human).